Consider the following 71-residue polypeptide: MKQAIHPEYKKVTATCSCGATFEFGSTAREDFYVDVCSQCHPFYTGKQKQATTGGRVERFNKRFGAAIKRN.

The Zn(2+) site is built by Cys-16, Cys-18, Cys-37, and Cys-40.

Belongs to the bacterial ribosomal protein bL31 family. Type A subfamily. In terms of assembly, part of the 50S ribosomal subunit. It depends on Zn(2+) as a cofactor.

Binds the 23S rRNA. The polypeptide is Large ribosomal subunit protein bL31 (Chromohalobacter salexigens (strain ATCC BAA-138 / DSM 3043 / CIP 106854 / NCIMB 13768 / 1H11)).